The sequence spans 167 residues: 3-dehydroquinate dehydratase (167 aa).

Residue Y22 is the Proton acceptor of the active site. The substrate site is built by N76, H82, and D89. Residue H102 is the Proton donor of the active site. Substrate-binding positions include 103-104 and R113; that span reads LT.

The protein belongs to the type-II 3-dehydroquinase family. Homododecamer.

The enzyme catalyses 3-dehydroquinate = 3-dehydroshikimate + H2O. It participates in metabolic intermediate biosynthesis; chorismate biosynthesis; chorismate from D-erythrose 4-phosphate and phosphoenolpyruvate: step 3/7. In terms of biological role, catalyzes a trans-dehydration via an enolate intermediate. This chain is 3-dehydroquinate dehydratase, found in Helicobacter pylori (strain Shi470).